Reading from the N-terminus, the 319-residue chain is Exopolyphosphatase 2 (319 aa).

This sequence belongs to the GppA/Ppx family. Homodimer.

It carries out the reaction [phosphate](n) + H2O = [phosphate](n-1) + phosphate + H(+). Exopolyphosphatase activity is inhibited by ppGpp alarmones produced during the bacterial stringent response. In terms of biological role, degradation of inorganic polyphosphates (polyP). Releases orthophosphate processively from the ends of the polyP chain. Prefers long-chain length polyphosphates as substrates. This is Exopolyphosphatase 2 from Mycobacterium tuberculosis (strain CDC 1551 / Oshkosh).